The chain runs to 271 residues: Type III pantothenate kinase (271 aa).

An ATP-binding site is contributed by 6–13 (DVRNTHTV). 109 to 112 (GADR) lines the substrate pocket. Catalysis depends on D111, which acts as the Proton acceptor. Residue D131 participates in K(+) binding. S134 contributes to the ATP binding site. T186 contacts substrate.

Belongs to the type III pantothenate kinase family. In terms of assembly, homodimer. The cofactor is NH4(+). K(+) is required as a cofactor.

Its subcellular location is the cytoplasm. The catalysed reaction is (R)-pantothenate + ATP = (R)-4'-phosphopantothenate + ADP + H(+). Its pathway is cofactor biosynthesis; coenzyme A biosynthesis; CoA from (R)-pantothenate: step 1/5. Functionally, catalyzes the phosphorylation of pantothenate (Pan), the first step in CoA biosynthesis. The sequence is that of Type III pantothenate kinase from Mycolicibacterium vanbaalenii (strain DSM 7251 / JCM 13017 / BCRC 16820 / KCTC 9966 / NRRL B-24157 / PYR-1) (Mycobacterium vanbaalenii).